Consider the following 135-residue polypeptide: Small ribosomal subunit protein uS11 (135 aa).

Positions 1–22 (MPPKSRTAAGAKKVRRKEKKNV) are disordered.

Belongs to the universal ribosomal protein uS11 family. Part of the 30S ribosomal subunit. Interacts with proteins S7 and S18. Binds to IF-3.

Its function is as follows. Located on the platform of the 30S subunit, it bridges several disparate RNA helices of the 16S rRNA. Forms part of the Shine-Dalgarno cleft in the 70S ribosome. This Nocardioides sp. (strain ATCC BAA-499 / JS614) protein is Small ribosomal subunit protein uS11.